The following is a 305-amino-acid chain: Epoxyqueuosine reductase (305 aa).

Asp128 serves as the catalytic Proton donor. The 4Fe-4S ferredoxin-type domain occupies 170–202 (LSLTSDTPHAKYCGTCRKCLDICPTKAIVHPFV). Residues Cys182, Cys185, Cys188, Cys192, Cys208, Cys236, Cys239, and Cys243 each contribute to the [4Fe-4S] cluster site.

Belongs to the QueG family. Monomer. The cofactor is cob(II)alamin. Requires [4Fe-4S] cluster as cofactor.

The protein localises to the cytoplasm. The catalysed reaction is epoxyqueuosine(34) in tRNA + AH2 = queuosine(34) in tRNA + A + H2O. Its pathway is tRNA modification; tRNA-queuosine biosynthesis. Its function is as follows. Catalyzes the conversion of epoxyqueuosine (oQ) to queuosine (Q), which is a hypermodified base found in the wobble positions of tRNA(Asp), tRNA(Asn), tRNA(His) and tRNA(Tyr). In Atelocyanobacterium thalassa (isolate ALOHA), this protein is Epoxyqueuosine reductase.